Reading from the N-terminus, the 478-residue chain is Glycogen synthase (478 aa).

Position 15 (Lys-15) interacts with ADP-alpha-D-glucose.

This sequence belongs to the glycosyltransferase 1 family. Bacterial/plant glycogen synthase subfamily.

The catalysed reaction is [(1-&gt;4)-alpha-D-glucosyl](n) + ADP-alpha-D-glucose = [(1-&gt;4)-alpha-D-glucosyl](n+1) + ADP + H(+). The protein operates within glycan biosynthesis; glycogen biosynthesis. In terms of biological role, synthesizes alpha-1,4-glucan chains using ADP-glucose. The polypeptide is Glycogen synthase (Bacillus cytotoxicus (strain DSM 22905 / CIP 110041 / 391-98 / NVH 391-98)).